Reading from the N-terminus, the 345-residue chain is NADH-quinone oxidoreductase subunit H (345 aa).

8 consecutive transmembrane segments (helical) span residues 9–29, 82–102, 108–128, 154–174, 183–203, 241–261, 282–302, and 325–345; these read ALGAFLVINAMLLSASLLVFA, VVMVVIAMTTASLIPFAEGVV, VGVIMLLALTSISVYGVTLAG, MGLAVISVVLIAGSLNFMEIV, LLGWNAVRNPIGCLIFIVTAF, YVNWFIASFFIVTLFFGGYLV, LLQFVSLMLKVSFFSFVFIWV, and IALANAILIALGVVLFGAVGL.

It belongs to the complex I subunit 1 family. NDH-1 is composed of 14 different subunits. Subunits NuoA, H, J, K, L, M, N constitute the membrane sector of the complex.

Its subcellular location is the cell inner membrane. It carries out the reaction a quinone + NADH + 5 H(+)(in) = a quinol + NAD(+) + 4 H(+)(out). Functionally, NDH-1 shuttles electrons from NADH, via FMN and iron-sulfur (Fe-S) centers, to quinones in the respiratory chain. The immediate electron acceptor for the enzyme in this species is believed to be ubiquinone. Couples the redox reaction to proton translocation (for every two electrons transferred, four hydrogen ions are translocated across the cytoplasmic membrane), and thus conserves the redox energy in a proton gradient. This subunit may bind ubiquinone. The sequence is that of NADH-quinone oxidoreductase subunit H from Salinibacter ruber (strain DSM 13855 / M31).